The chain runs to 75 residues: Small ribosomal subunit protein bS18 (75 aa).

It belongs to the bacterial ribosomal protein bS18 family. In terms of assembly, part of the 30S ribosomal subunit. Forms a tight heterodimer with protein bS6.

In terms of biological role, binds as a heterodimer with protein bS6 to the central domain of the 16S rRNA, where it helps stabilize the platform of the 30S subunit. The polypeptide is Small ribosomal subunit protein bS18 (Anaplasma marginale (strain St. Maries)).